A 367-amino-acid polypeptide reads, in one-letter code: Histidinol-phosphate aminotransferase (367 aa).

Lys221 bears the N6-(pyridoxal phosphate)lysine mark.

Belongs to the class-II pyridoxal-phosphate-dependent aminotransferase family. Histidinol-phosphate aminotransferase subfamily. Homodimer. Requires pyridoxal 5'-phosphate as cofactor.

The catalysed reaction is L-histidinol phosphate + 2-oxoglutarate = 3-(imidazol-4-yl)-2-oxopropyl phosphate + L-glutamate. Its pathway is amino-acid biosynthesis; L-histidine biosynthesis; L-histidine from 5-phospho-alpha-D-ribose 1-diphosphate: step 7/9. The polypeptide is Histidinol-phosphate aminotransferase (Erythrobacter litoralis (strain HTCC2594)).